The primary structure comprises 396 residues: Putative peptide chain release factor 1, mitochondrial (396 aa).

At Gln-270 the chain carries N5-methylglutamine.

Belongs to the prokaryotic/mitochondrial release factor family. In terms of processing, methylation of glutamine in the GGQ triplet is conserved from bacteria to mammals.

The protein localises to the mitochondrion. The sequence is that of Putative peptide chain release factor 1, mitochondrial from Schizosaccharomyces pombe (strain 972 / ATCC 24843) (Fission yeast).